The chain runs to 160 residues: Probable NADH dehydrogenase [ubiquinone] 1 beta subcomplex subunit 2, mitochondrial (160 aa).

The protein belongs to the complex I NDUFB2 subunit family. As to quaternary structure, complex I is composed of 45 different subunits.

It is found in the mitochondrion inner membrane. Functionally, accessory subunit of the mitochondrial membrane respiratory chain NADH dehydrogenase (Complex I), that is believed not to be involved in catalysis. Complex I functions in the transfer of electrons from NADH to the respiratory chain. The immediate electron acceptor for the enzyme is believed to be ubiquinone. This is Probable NADH dehydrogenase [ubiquinone] 1 beta subcomplex subunit 2, mitochondrial from Caenorhabditis briggsae.